A 542-amino-acid chain; its full sequence is Chondroitin sulfate N-acetylgalactosaminyltransferase 2 (542 aa).

Over 1-11 (MPRRGLILHTR) the chain is Cytoplasmic. Residues 12–32 (THWLLLGLALLCSLVLFMYLL) form a helical; Signal-anchor for type II membrane protein membrane-spanning segment. Topologically, residues 33-542 (ECAPQTDGNA…AYRTNSEAVG (510 aa)) are lumenal. N-linked (GlcNAc...) asparagine glycosylation is present at Asn-41. Residues 59 to 105 (ALLQEQEEHYQTRATSLKRQIAQLKQELQEMSEKMRSLQERRNVGAN) are a coiled coil. Residue Asn-333 is glycosylated (N-linked (GlcNAc...) asparagine). Residues Asp-369 and His-486 each contribute to the a divalent metal cation site.

The protein belongs to the chondroitin N-acetylgalactosaminyltransferase family. As to expression, ubiquitous.

The protein resides in the golgi apparatus. Its subcellular location is the golgi stack membrane. It catalyses the reaction 3-O-(beta-D-GlcA-(1-&gt;3)-beta-D-Gal-(1-&gt;3)-beta-D-Gal-(1-&gt;4)-beta-D-Xyl)-L-seryl-[protein] + UDP-N-acetyl-alpha-D-galactosamine = 3-O-(beta-D-GalNAc-(1-&gt;4)-beta-D-GlcA-(1-&gt;3)-beta-D-Gal-(1-&gt;3)-beta-D-Gal-(1-&gt;4)-beta-D-Xyl)-L-seryl-[protein] + UDP + H(+). Its function is as follows. Transfers 1,4-N-acetylgalactosamine (GalNAc) from UDP-GalNAc to the non-reducing end of glucuronic acid (GlcUA). Required for addition of the first GalNAc to the core tetrasaccharide linker and for elongation of chondroitin chains. The chain is Chondroitin sulfate N-acetylgalactosaminyltransferase 2 (CSGALNACT2) from Homo sapiens (Human).